The primary structure comprises 81 residues: Photosystem I iron-sulfur center (81 aa).

2 4Fe-4S ferredoxin-type domains span residues 2-31 (SHSV…MIPW) and 39-68 (IAPA…VRVY). [4Fe-4S] cluster contacts are provided by Cys-11, Cys-14, Cys-17, Cys-21, Cys-48, Cys-51, Cys-54, and Cys-58.

In terms of assembly, the eukaryotic PSI reaction center is composed of at least 11 subunits. The cofactor is [4Fe-4S] cluster.

It localises to the plastid. The protein resides in the chloroplast thylakoid membrane. The catalysed reaction is reduced [plastocyanin] + hnu + oxidized [2Fe-2S]-[ferredoxin] = oxidized [plastocyanin] + reduced [2Fe-2S]-[ferredoxin]. Its function is as follows. Apoprotein for the two 4Fe-4S centers FA and FB of photosystem I (PSI); essential for photochemical activity. FB is the terminal electron acceptor of PSI, donating electrons to ferredoxin. The C-terminus interacts with PsaA/B/D and helps assemble the protein into the PSI complex. Required for binding of PsaD and PsaE to PSI. PSI is a plastocyanin-ferredoxin oxidoreductase, converting photonic excitation into a charge separation, which transfers an electron from the donor P700 chlorophyll pair to the spectroscopically characterized acceptors A0, A1, FX, FA and FB in turn. The chain is Photosystem I iron-sulfur center from Liriodendron tulipifera (Tuliptree).